The chain runs to 85 residues: Large ribosomal subunit protein bL27 (85 aa).

This sequence belongs to the bacterial ribosomal protein bL27 family.

The sequence is that of Large ribosomal subunit protein bL27 from Vesicomyosocius okutanii subsp. Calyptogena okutanii (strain HA).